We begin with the raw amino-acid sequence, 276 residues long: Diaminopimelate epimerase (276 aa).

Substrate contacts are provided by asparagine 13, glutamine 46, and asparagine 66. Cysteine 75 functions as the Proton donor in the catalytic mechanism. Residues 76–77 (GN), asparagine 159, asparagine 192, and 210–211 (ER) contribute to the substrate site. Cysteine 219 functions as the Proton acceptor in the catalytic mechanism. 220-221 (GT) serves as a coordination point for substrate.

It belongs to the diaminopimelate epimerase family. In terms of assembly, homodimer.

Its subcellular location is the cytoplasm. The catalysed reaction is (2S,6S)-2,6-diaminopimelate = meso-2,6-diaminopimelate. It participates in amino-acid biosynthesis; L-lysine biosynthesis via DAP pathway; DL-2,6-diaminopimelate from LL-2,6-diaminopimelate: step 1/1. In terms of biological role, catalyzes the stereoinversion of LL-2,6-diaminopimelate (L,L-DAP) to meso-diaminopimelate (meso-DAP), a precursor of L-lysine and an essential component of the bacterial peptidoglycan. This chain is Diaminopimelate epimerase, found in Azotobacter vinelandii (strain DJ / ATCC BAA-1303).